Consider the following 562-residue polypeptide: Arginine--tRNA ligase (562 aa).

Positions 129–139 (ANPTGPLHVGH) match the 'HIGH' region motif.

Belongs to the class-I aminoacyl-tRNA synthetase family. In terms of assembly, monomer.

The protein resides in the cytoplasm. It carries out the reaction tRNA(Arg) + L-arginine + ATP = L-arginyl-tRNA(Arg) + AMP + diphosphate. This Xylella fastidiosa (strain M23) protein is Arginine--tRNA ligase.